A 91-amino-acid polypeptide reads, in one-letter code: Acylphosphatase (91 aa).

The Acylphosphatase-like domain occupies 5–91 (CLHAYVGGRV…QGIAGFIVRR (87 aa)). Active-site residues include arginine 20 and asparagine 38.

This sequence belongs to the acylphosphatase family.

It catalyses the reaction an acyl phosphate + H2O = a carboxylate + phosphate + H(+). The sequence is that of Acylphosphatase (acyP) from Pseudomonas paraeruginosa (strain DSM 24068 / PA7) (Pseudomonas aeruginosa (strain PA7)).